We begin with the raw amino-acid sequence, 464 residues long: Dihydrolipoyl dehydrogenase (464 aa).

Residues 33–41 (EPKYWGGVC), K50, and G113 each bind FAD. Cysteines 41 and 46 form a disulfide. NAD(+)-binding positions include 178–182 (GAGAI), E201, and 266–269 (AIGF). FAD-binding residues include D309 and A317. H443 acts as the Proton acceptor in catalysis.

The protein belongs to the class-I pyridine nucleotide-disulfide oxidoreductase family. Homodimer. Part of the PDH complex, consisting of multiple copies of AceE (E1), DlaT (E2) and Lpd (E3), and of the BCKADH complex, consisting of multiple copies of BkdA/BkdB (E1), BkdC (E2) and Lpd (E3). The cofactor is FAD.

It is found in the cytoplasm. It catalyses the reaction N(6)-[(R)-dihydrolipoyl]-L-lysyl-[protein] + NAD(+) = N(6)-[(R)-lipoyl]-L-lysyl-[protein] + NADH + H(+). Its function is as follows. Lipoamide dehydrogenase is a component of the alpha-ketoacid dehydrogenase complexes. Catalyzes the reoxidation of dihydrolipoyl groups which are covalently attached to the lipoate acyltransferase components (E2) of the complexes. The protein is Dihydrolipoyl dehydrogenase (lpd) of Mycobacterium bovis (strain ATCC BAA-935 / AF2122/97).